A 600-amino-acid chain; its full sequence is CTP synthase (600 aa).

The region spanning 304-570 is the Glutamine amidotransferase type-1 domain; sequence TIVLVGKYTH…IQSGEEVEWS (267 aa). Residues cysteine 403, histidine 532, and glutamate 534 each act as for GATase activity in the active site.

It belongs to the CTP synthase family.

It catalyses the reaction UTP + L-glutamine + ATP + H2O = CTP + L-glutamate + ADP + phosphate + 2 H(+). Its pathway is pyrimidine metabolism; CTP biosynthesis via de novo pathway; CTP from UDP: step 2/2. Functionally, catalyzes the ATP-dependent amination of UTP to CTP with either L-glutamine or ammonia as the source of nitrogen. The chain is CTP synthase (ura7) from Schizosaccharomyces pombe (strain 972 / ATCC 24843) (Fission yeast).